Here is an 86-residue protein sequence, read N- to C-terminus: UPF0457 protein SERP1772 (86 aa).

Belongs to the UPF0457 family.

This chain is UPF0457 protein SERP1772, found in Staphylococcus epidermidis (strain ATCC 35984 / DSM 28319 / BCRC 17069 / CCUG 31568 / BM 3577 / RP62A).